The chain runs to 116 residues: Large ribosomal subunit protein bL19 (116 aa).

Belongs to the bacterial ribosomal protein bL19 family.

In terms of biological role, this protein is located at the 30S-50S ribosomal subunit interface and may play a role in the structure and function of the aminoacyl-tRNA binding site. In Pseudothermotoga lettingae (strain ATCC BAA-301 / DSM 14385 / NBRC 107922 / TMO) (Thermotoga lettingae), this protein is Large ribosomal subunit protein bL19.